The following is a 326-amino-acid chain: Cytosolic sulfotransferase 12 (326 aa).

Lysine 75–tryptophan 80 serves as a coordination point for 3'-phosphoadenylyl sulfate. Histidine 140 functions as the Proton acceptor in the catalytic mechanism. Residues arginine 162, serine 170, tyrosine 228, and arginine 290–glycine 292 each bind 3'-phosphoadenylyl sulfate.

Belongs to the sulfotransferase 1 family. In terms of assembly, dimer. In terms of tissue distribution, expressed in the aerial parts of seedlings, in roots, leaves and flowers. Not detected in stems and siliques.

The protein localises to the cytoplasm. Its function is as follows. Sulfotransferase that utilizes 3'-phospho-5'-adenylyl sulfate (PAPS) as sulfonate donor to catalyze the stereospecific sulfate conjugation of 24-epibrassinosteroids. Preferred substrates are 24-epicathasterone and 6-deoxo-24-epicathasterone. Low activity with 22-deoxy-24-epiteasterone. No activity with 24-epimers catasterone and brassinolide. Sulfonates salicylic acid. May be involved in detoxification. Enhances plant response to pathogen infection and contributes to long distance signaling in systemic acquired resistance (SAR). The chain is Cytosolic sulfotransferase 12 (SOT12) from Arabidopsis thaliana (Mouse-ear cress).